The following is a 411-amino-acid chain: Arginine deiminase (411 aa).

The active-site Amidino-cysteine intermediate is C401.

The protein belongs to the arginine deiminase family.

Its subcellular location is the cytoplasm. The catalysed reaction is L-arginine + H2O = L-citrulline + NH4(+). The protein operates within amino-acid degradation; L-arginine degradation via ADI pathway; carbamoyl phosphate from L-arginine: step 1/2. In Staphylococcus epidermidis (strain ATCC 35984 / DSM 28319 / BCRC 17069 / CCUG 31568 / BM 3577 / RP62A), this protein is Arginine deiminase.